A 418-amino-acid chain; its full sequence is MAASMCDVFSFCVGVAGRARVSVEVRFVSSAKGKGLFATQLIRKGETIFVERPLVAAQFLWNALYRYRACDHCLRALEKAEENAQRLTGKPGQVLPHPELCTVRKDLHQNCPHCQVMYCSAECRLAATEQYHQVLCPGPSQDDPLHPLNKLQEAWRSIHYPPETASIMLMARMVATVKQAKDKDRWIRLFSQFCNKTANEEEEIVHKLLGDKFKGQLELLRRLFTEALYEEAVSQWFTPDGFRSLFALVGTNGQGIGTSSLSQWVHACDTLELKPQDREQLDAFIDQLYKDIEAATGEFLNCEGSGLFVLQSCCNHSCVPNAETSFPENNFLLHVTALEDIKPGEEICISYLDCCQRERSRHSRHKILRENYLFVCSCPKCLAEADEPNVTSEEEEEEEEEEEGEPEDAELGDEMTDV.

An SET domain is found at 21–352; that stretch reads VSVEVRFVSS…PGEEICISYL (332 aa). An MYND-type zinc finger spans residues 98–136; that stretch reads PELCTVRKDLHQNCPHCQVMYCSAECRLAATEQYHQVLC. Residue tyrosine 351 coordinates S-adenosyl-L-methionine. Residues 385–418 form a disordered region; the sequence is ADEPNVTSEEEEEEEEEEEGEPEDAELGDEMTDV.

It belongs to the class V-like SAM-binding methyltransferase superfamily. As to quaternary structure, interacts with the N-CoR complex. Interacts with EHMT2 and CBX5. In terms of processing, ubiquitinated and degradaed by the proteasome in response to mild hypothermia (32 degrees Celsius), relieving repression of the SP1 gene.

The protein localises to the cytoplasm. The catalysed reaction is L-lysyl-[protein] + 3 S-adenosyl-L-methionine = N(6),N(6),N(6)-trimethyl-L-lysyl-[protein] + 3 S-adenosyl-L-homocysteine + 3 H(+). It catalyses the reaction L-lysyl(20)-[histone H4] + 3 S-adenosyl-L-methionine = N(6),N(6),N(6)-trimethyl-L-lysyl(20)-[histone H4] + 3 S-adenosyl-L-homocysteine + 3 H(+). It carries out the reaction L-lysyl(36)-[histone H3] + 3 S-adenosyl-L-methionine = N(6),N(6),N(6)-trimethyl-L-lysyl(36)-[histone H3] + 3 S-adenosyl-L-homocysteine + 3 H(+). Functionally, protein-lysine N-trimethyltransferase that specifically catalyzes trimethylation of 'Lys-22' of the RPL40/eL40 subunit of the 60S ribosome, thereby promoting translation elongation and protein synthesis. May also act as a histone methyltransferase in the context of histone octamers, but not on nucleosome substrates: trimethylates 'Lys-36' of histone H3 and 'Lys-20' of histone H4 to form H3K36me3 and H4K20me3, respectively. The histone methyltransferase activity, which is independent of its SET domain, is however unsure in vivo. In association with the NCoR corepressor complex, involved in the repression of toll-like receptor 4 (TLR4)-target inflammatory genes in macrophages, possibly by catalyzing the formation of H4K20me3 at the gene promoters. Plays an important role in embryonic stem (ES) cell self-renewal and differentiation. Maintains genome stability of ES cells during differentiation through regulation of heterochromatin formation and repression of endogenous repetitive DNA elements by promoting H4K20me3 marks. Acts as a regulator of the hypothermia response: its degradation in response to mild hypothermia relieves the formation of H3K36me3 at gene promoters, allowing expression of the neuroprotective gene SP1. This chain is Protein-lysine N-trimethyltransferase SMYD5, found in Homo sapiens (Human).